The primary structure comprises 368 residues: Tetraacyldisaccharide 4'-kinase (368 aa).

An ATP-binding site is contributed by 66-73; the sequence is TVGGTGKT.

It belongs to the LpxK family.

The enzyme catalyses a lipid A disaccharide + ATP = a lipid IVA + ADP + H(+). It functions in the pathway glycolipid biosynthesis; lipid IV(A) biosynthesis; lipid IV(A) from (3R)-3-hydroxytetradecanoyl-[acyl-carrier-protein] and UDP-N-acetyl-alpha-D-glucosamine: step 6/6. Functionally, transfers the gamma-phosphate of ATP to the 4'-position of a tetraacyldisaccharide 1-phosphate intermediate (termed DS-1-P) to form tetraacyldisaccharide 1,4'-bis-phosphate (lipid IVA). This chain is Tetraacyldisaccharide 4'-kinase, found in Desulfatibacillum aliphaticivorans.